A 366-amino-acid chain; its full sequence is S-adenosylmethionine:tRNA ribosyltransferase-isomerase (366 aa).

Belongs to the QueA family. As to quaternary structure, monomer.

It localises to the cytoplasm. The catalysed reaction is 7-aminomethyl-7-carbaguanosine(34) in tRNA + S-adenosyl-L-methionine = epoxyqueuosine(34) in tRNA + adenine + L-methionine + 2 H(+). It participates in tRNA modification; tRNA-queuosine biosynthesis. In terms of biological role, transfers and isomerizes the ribose moiety from AdoMet to the 7-aminomethyl group of 7-deazaguanine (preQ1-tRNA) to give epoxyqueuosine (oQ-tRNA). This chain is S-adenosylmethionine:tRNA ribosyltransferase-isomerase, found in Parasynechococcus marenigrum (strain WH8102).